Consider the following 187-residue polypeptide: Large ribosomal subunit protein uL5 (187 aa).

Belongs to the universal ribosomal protein uL5 family. As to quaternary structure, part of the 50S ribosomal subunit; part of the 5S rRNA/L5/L18/L25 subcomplex. Contacts the 5S rRNA and the P site tRNA. Forms a bridge to the 30S subunit in the 70S ribosome.

Its function is as follows. This is one of the proteins that bind and probably mediate the attachment of the 5S RNA into the large ribosomal subunit, where it forms part of the central protuberance. In the 70S ribosome it contacts protein S13 of the 30S subunit (bridge B1b), connecting the 2 subunits; this bridge is implicated in subunit movement. Contacts the P site tRNA; the 5S rRNA and some of its associated proteins might help stabilize positioning of ribosome-bound tRNAs. The sequence is that of Large ribosomal subunit protein uL5 from Mycobacterium sp. (strain JLS).